We begin with the raw amino-acid sequence, 241 residues long: Triosephosphate isomerase (241 aa).

Residue 9–11 (NWK) participates in substrate binding. The active-site Electrophile is His-96. Glu-165 (proton acceptor) is an active-site residue. Substrate-binding positions include Gly-171, Ser-204, and 225–226 (GG).

This sequence belongs to the triosephosphate isomerase family. In terms of assembly, homodimer.

The protein localises to the cytoplasm. The enzyme catalyses D-glyceraldehyde 3-phosphate = dihydroxyacetone phosphate. It functions in the pathway carbohydrate biosynthesis; gluconeogenesis. The protein operates within carbohydrate degradation; glycolysis; D-glyceraldehyde 3-phosphate from glycerone phosphate: step 1/1. Its function is as follows. Involved in the gluconeogenesis. Catalyzes stereospecifically the conversion of dihydroxyacetone phosphate (DHAP) to D-glyceraldehyde-3-phosphate (G3P). This Trichodesmium erythraeum (strain IMS101) protein is Triosephosphate isomerase.